Here is a 915-residue protein sequence, read N- to C-terminus: Protein translocase subunit SecA (915 aa).

ATP contacts are provided by residues Gln87, 105–109, and Asp512; that span reads GEGKT. The segment at 881 to 915 is disordered; sequence LPGTAPVRPEPKIGRNEPCPCGSGKKYKHCHGQLN. Cys899, Cys901, Cys910, and His911 together coordinate Zn(2+). Basic residues predominate over residues 905 to 915; that stretch reads KKYKHCHGQLN.

Belongs to the SecA family. As to quaternary structure, monomer and homodimer. Part of the essential Sec protein translocation apparatus which comprises SecA, SecYEG and auxiliary proteins SecDF-YajC and YidC. Zn(2+) is required as a cofactor.

It is found in the cell inner membrane. The protein localises to the cytoplasm. It catalyses the reaction ATP + H2O + cellular proteinSide 1 = ADP + phosphate + cellular proteinSide 2.. Part of the Sec protein translocase complex. Interacts with the SecYEG preprotein conducting channel. Has a central role in coupling the hydrolysis of ATP to the transfer of proteins into and across the cell membrane, serving both as a receptor for the preprotein-SecB complex and as an ATP-driven molecular motor driving the stepwise translocation of polypeptide chains across the membrane. This chain is Protein translocase subunit SecA, found in Azotobacter vinelandii (strain DJ / ATCC BAA-1303).